The chain runs to 278 residues: SLAM family member 8 (278 aa).

The first 20 residues, 1 to 20 (MWSLWSLLLFEALLPVVVVS), serve as a signal peptide directing secretion. The Extracellular segment spans residues 21-231 (VQVLSKVGDS…AASGKASYKD (211 aa)). Asn83 and Asn154 each carry an N-linked (GlcNAc...) asparagine glycan. In terms of domain architecture, Ig-like C2-type spans 126-213 (PEVQVFTAAA…PVSWDMTTVT (88 aa)). An intrachain disulfide couples Cys150 to Cys199. The chain crosses the membrane as a helical span at residues 232 to 252 (VLLVVVPITLFLILAGLFGAW). Over 253–278 (HHGLCSGKKKDACTDGVLPETENALV) the chain is Cytoplasmic.

It is found in the membrane. May play a role in B-lineage commitment and/or modulation of signaling through the B-cell receptor. The polypeptide is SLAM family member 8 (Slamf8) (Mus musculus (Mouse)).